Reading from the N-terminus, the 1125-residue chain is Transient receptor potential cation channel subfamily A member 1 (1125 aa).

Residues Met-1–His-721 are Cytoplasmic-facing. ANK repeat units follow at residues Glu-63–Val-94, Tyr-98–Leu-127, Asn-131–Leu-161, Asn-165–Lys-194, Trp-198–Tyr-227, Lys-239–Met-268, Ala-272–Asp-301, Asn-309–Ser-338, and Glu-342–Ile-371. 5 disulfide bridges follow: Cys-193–Cys-666, Cys-463–Cys-666, Cys-609–Cys-622, Cys-622–Cys-666, and Cys-634–Cys-859. Pro-395 is modified (4-hydroxyproline; transient). 5 ANK repeats span residues Asp-413–Ser-442, Asp-446–Leu-475, His-482–Ser-511, Asn-514–Asp-543, and Glu-548–Leu-577. Residues Cys-415 and Cys-422 each coordinate (E)-cinnamaldehyde. Cys-622 contacts (E)-cinnamaldehyde. The residue at position 634 (Cys-634) is a Cysteine sulfenic acid (-SOH); transient; in hyperoxia. (E)-cinnamaldehyde is bound by residues Cys-642, Cys-666, and Lys-712. Residues Met-722–Ile-742 traverse the membrane as a helical segment. Topologically, residues Gln-743–Thr-767 are extracellular. 2 N-linked (GlcNAc...) asparagine glycosylation sites follow: Asn-749 and Asn-755. A helical transmembrane segment spans residues Leu-768–Tyr-788. The Cytoplasmic segment spans residues Cys-789–Tyr-806. 4 residues coordinate Ca(2+): Glu-791, Gln-794, Asn-808, and Glu-811. Residues Asn-807–Leu-827 traverse the membrane as a helical segment. The Extracellular segment spans residues Asp-828–Tyr-832. The chain crosses the membrane as a helical span at residues Met-833 to Leu-853. Over Gln-854 to Ser-876 the chain is Cytoplasmic. Cys-859 is subject to Cysteine sulfenic acid (-SOH); transient; in hyperoxia. Residues Thr-877–Phe-897 form a helical membrane-spanning segment. The Extracellular portion of the chain corresponds to Gln-898–Pro-904. Positions Leu-905–Phe-925 form an intramembrane region, pore-forming. The Extracellular portion of the chain corresponds to Leu-926–Pro-937. The helical transmembrane segment at Val-938 to Leu-959 threads the bilayer. At Ile-960–Ile-1125 the chain is on the cytoplasmic side. Residues Met-1044–Lys-1073 are a coiled coil. Residue Lys-1048–Lys-1054 participates in a 1,2-diacyl-sn-glycero-3-phospho-(1D-myo-inositol) binding.

Belongs to the transient receptor (TC 1.A.4) family. Homotetramer. Interacts with TMEM100. Interacts with EGLN1. Interacts with the scorpion wasabi receptor toxin at the same site that electrophiles but in a non-covalent manner. Post-translationally, TRPA1 activation by electrophiles occurs though covalent modification of specific cysteine residues in the N-terminal cytoplasmic domain. Hydroxylation is required for TRPA1 activity inhibition in normoxia. In hypoxia, the decrease in oxygen concentration diminishes the activity of the hydroxylase EGLN1, thus relieving TRPA1 from inhibition and ultimately leading to channel activation. In terms of processing, oxidation of Cys-634 and Cys-859 in hyperoxia may override the hydroxylase EGLN1-mediated inhibition, causing TRPA1 activation. As to expression, specifically expressed in a subset of nociceptive neurons. Expressed in dorsal root ganglia.

The protein resides in the cell membrane. It carries out the reaction Ca(2+)(in) = Ca(2+)(out). It catalyses the reaction Mg(2+)(in) = Mg(2+)(out). The catalysed reaction is Na(+)(in) = Na(+)(out). The enzyme catalyses K(+)(in) = K(+)(out). It carries out the reaction Zn(2+)(in) = Zn(2+)(out). With respect to regulation, electrophilic ligands activate the channel by covalent modification of intracellular cysteines; Cys-622 plays a key role in covalent binding of electrophiles. Extracellular Ca(2+) both potentiates and inactivates TRPA1; a rapid potentiation follows by slow desensitization. Activated by increase in intracellular Ca(2+) concentration. Inhibited by ruthenium red, a potent blocker of TRPV channels and selectively by A-967079. Activated by benzyl isothiocyanate (BITC), iodoacetamide, sulfhydryl reactive agent MTSEA, N-methyl maleimide (NMM), N-ethylmaleimide (NEM), and 2-aminoethyldiphenylborinate (2-APB). Also activated by hyperoxia. Acivated by intracellular Zn(2+). TRPA1 activation may critically depend on the presence of small intracellular compounds such as polyphosphates. Its function is as follows. Ligand-activated Ca(2+)-permeable, nonselective cation channel. Involved in pain detection and possibly also in cold perception, oxygen concentration perception, cough, itch, and inner ear function. Has a relatively high Ca(2+) selectivity, with a preference for divalent over monovalent cations (Ca(2+) &gt; Ba(2+) &gt; Mg(2+) &gt; NH4(+) &gt; Li(+) &gt; K(+)), the influx of cation into the cytoplasm, leads to membrane depolarization. Has a central role in the pain response to endogenous inflammatory mediators, such as bradykinin and to a diverse array of irritants. Activated by a large variety of structurally unrelated electrophilic and non-electrophilic chemical compounds, such as allylthiocyanate (AITC) from mustard oil or wasabi, cinnamaldehyde, diallyl disulfide (DADS) from garlic, and acrolein, an environmental irritant. Electrophilic ligands activate TRPA1 by interacting with critical N-terminal Cys residues in a covalent manner. Non-electrophile agonists bind at distinct sites in the transmembrane domain to promote channel activation. Also acts as an ionotropic cannabinoid receptor by being activated by delta(9)-tetrahydrocannabinol (THC), the psychoactive component of marijuana. May be a component for the mechanosensitive transduction channel of hair cells in inner ear, thereby participating in the perception of sounds. The chain is Transient receptor potential cation channel subfamily A member 1 from Rattus norvegicus (Rat).